The following is a 95-amino-acid chain: Protein TusB (95 aa).

This sequence belongs to the DsrH/TusB family. Heterohexamer, formed by a dimer of trimers. The hexameric TusBCD complex contains 2 copies each of TusB, TusC and TusD. The TusBCD complex interacts with TusE.

The protein resides in the cytoplasm. Its function is as follows. Part of a sulfur-relay system required for 2-thiolation of 5-methylaminomethyl-2-thiouridine (mnm(5)s(2)U) at tRNA wobble positions. The chain is Protein TusB from Klebsiella pneumoniae (strain 342).